A 300-amino-acid chain; its full sequence is Protein YIF1B-B (300 aa).

Residues 1–46 (MNQESSFRAPPKRRVRGSNPNISNPHQLFDDTSGGPVPHGGDFPNH) are disordered. Residues 1–142 (MNQESSFRAP…APRFDINAPD (142 aa)) are Cytoplasmic-facing. A helical transmembrane segment spans residues 143-163 (LYIPVMAFITYILVAGLALGT). Over 164–178 (QSRFSPEILGMQASS) the chain is Extracellular. A helical transmembrane segment spans residues 179–199 (ALAWLIVEVLAILLSLYLVTV). The Cytoplasmic segment spans residues 200–205 (NTDLTT). Residues 206-226 (VDLVAFSGYKYVGMISGVIAG) traverse the membrane as a helical segment. A topological domain (extracellular) is located at residue Leu227. Residues 228 to 248 (LFGNTGYYVVLAWCCISIVFF) form a helical membrane-spanning segment. Topologically, residues 249–278 (MIRTLRLKILSEAAAEGVLVRGARNQLRMY) are cytoplasmic. The helical transmembrane segment at 279 to 299 (LTMAIAAVQPIFMYWLTYHLV) threads the bilayer. Residue Arg300 is a topological domain, extracellular.

The protein belongs to the YIF1 family.

It localises to the endoplasmic reticulum membrane. The protein resides in the golgi apparatus membrane. The protein localises to the endoplasmic reticulum-Golgi intermediate compartment membrane. In terms of biological role, functions in endoplasmic reticulum to Golgi vesicle-mediated transport and regulates the proper organization of the endoplasmic reticulum and the Golgi. Plays a key role in targeting to neuronal dendrites receptors such as HTR1A. Plays also a role in primary cilium and sperm flagellum assembly probably through protein transport to these compartments. The polypeptide is Protein YIF1B-B (yif1b-b) (Xenopus laevis (African clawed frog)).